Here is a 456-residue protein sequence, read N- to C-terminus: tRNA-2-methylthio-N(6)-dimethylallyladenosine synthase (456 aa).

The 117-residue stretch at 13-129 folds into the MTTase N-terminal domain; the sequence is RYLYVRTFGC…IASLLEEVER (117 aa). [4Fe-4S] cluster-binding residues include Cys22, Cys58, Cys92, Cys168, Cys172, and Cys175. Residues 154 to 384 form the Radical SAM core domain; that stretch reads GTGDVVAQVT…QSIQADITLQ (231 aa). Residues 387–450 form the TRAM domain; the sequence is LAETGTVREV…SHSLKGELLS (64 aa).

It belongs to the methylthiotransferase family. MiaB subfamily. As to quaternary structure, monomer. It depends on [4Fe-4S] cluster as a cofactor.

Its subcellular location is the cytoplasm. It catalyses the reaction N(6)-dimethylallyladenosine(37) in tRNA + (sulfur carrier)-SH + AH2 + 2 S-adenosyl-L-methionine = 2-methylsulfanyl-N(6)-dimethylallyladenosine(37) in tRNA + (sulfur carrier)-H + 5'-deoxyadenosine + L-methionine + A + S-adenosyl-L-homocysteine + 2 H(+). Its function is as follows. Catalyzes the methylthiolation of N6-(dimethylallyl)adenosine (i(6)A), leading to the formation of 2-methylthio-N6-(dimethylallyl)adenosine (ms(2)i(6)A) at position 37 in tRNAs that read codons beginning with uridine. The polypeptide is tRNA-2-methylthio-N(6)-dimethylallyladenosine synthase (Syntrophobacter fumaroxidans (strain DSM 10017 / MPOB)).